Here is a 1849-residue protein sequence, read N- to C-terminus: Protein virilizer (1849 aa).

Composition is skewed to basic and acidic residues over residues 206-219 (QHYH…QREM), 242-265 (THSE…DWSR), 281-291 (RSRSDADEHKW), 332-347 (HSSE…EERS), and 785-818 (VEAK…AAEE). 6 disordered regions span residues 206–364 (QHYH…DEII), 783–818 (RVVE…AAEE), 1557–1584 (SASM…SSSG), 1666–1686 (GESK…EMTP), 1715–1782 (RGRG…NRGS), and 1798–1849 (IGSP…PYLR). Residues 1671–1684 (TLNLSGSPQSNREM) show a composition bias toward polar residues. Positions 1732-1742 (SRPPNTSRPPS) are enriched in low complexity. Residues 1800-1818 (SPSSWTESGGGSYRSTSES) show a composition bias toward polar residues.

It belongs to the vir family. Component of the WMM complex, a N6-methyltransferase complex composed of a catalytic subcomplex, named MAC, and of an associated subcomplex, named MACOM. The MAC subcomplex is composed of Ime4/Mettl3 and Mettl14. The MACOM subcomplex is composed of fl(2)d, Flacc/Xio, Hakai, vir, and, in some cases of nito. Part of a complex containing fl(2)d, Sxl and vir.

The protein resides in the nucleus. Associated component of the WMM complex, a complex that mediates N6-methyladenosine (m6A) methylation of mRNAs, a modification that plays a role in the efficiency of mRNA splicing and is required for sex determination. Required for sex determination and dosage compensation via Sxl alternative splicing: m6A methylation acts as a key regulator of Sxl pre-mRNA and promotes female-specific alternative splicing of Sxl, which determines female physiognomy. M6A methylation is also required for neuronal functions. Required for proper inclusion of regulated exons in Ubx transcripts, leading to isoforms Ia/b and IIa/b. This chain is Protein virilizer (vir), found in Drosophila pseudoobscura pseudoobscura (Fruit fly).